Reading from the N-terminus, the 679-residue chain is PHD finger protein PERSISTENT TAPETAL CELL 1 (679 aa).

The PHD-type zinc finger occupies Val-620–Asp-670.

In terms of biological role, probable transcriptional activator required for tapetal programmed cell death (PCD) and degeneration, and pollen development in anthers. The polypeptide is PHD finger protein PERSISTENT TAPETAL CELL 1 (Oryza sativa subsp. japonica (Rice)).